A 667-amino-acid chain; its full sequence is Cylicin-1 (667 aa).

Disordered stretches follow at residues 121–251 and 275–634; these read PYTH…SSNV and SQNN…ILPS. A compositionally biased stretch (basic and acidic residues) spans 129 to 172; it reads KKAESKKYKDDKKETALKKISKKDTGPHEVDEKPKRRNKADKTP. Low complexity predominate over residues 173-182; the sequence is SKSSHGSQLS. A compositionally biased stretch (basic and acidic residues) spans 187-197; the sequence is SKSETNPESKD. The span at 223-237 shows a compositional bias: low complexity; the sequence is STSTKKYSKSSKNNS. A compositionally biased stretch (polar residues) spans 238-251; sequence DAVSETCSKNSSNV. Composition is skewed to basic and acidic residues over residues 284-326, 345-371, 380-394, 417-431, 438-464, 483-506, 521-533, 549-558, and 583-593; these read KKDA…KDTE, SKKD…DAKK, SKKD…KDAE, GDSK…KDAV, SKKD…KEST, SKKD…KKAT, KKTEMFKSSD, and DSKKDAVEPKR. A run of 9 repeats spans residues 287 to 305, 306 to 337, 338 to 368, 369 to 405, 406 to 442, 443 to 475, 476 to 516, 517 to 547, and 548 to 569. Positions 287–569 are 9 X approximate tandem repeats; the sequence is AKKDAKGKGS…ESEESLFKPG (283 aa). The segment covering 624-633 has biased composition (pro residues); it reads PLPPCEPILP.

As to quaternary structure, interacts with proteins of spermatozoa head including ACTL7A, CCIN, FAM209A and SPACA1; the interactions may be necessary for proper acrosome attachment to the nuclear envelope. Testis.

The protein resides in the cytoplasm. It localises to the cytoskeleton. Its subcellular location is the perinuclear theca. It is found in the calyx. Plays a role in the establishment of normal sperm morphology during spermatogenesis and is required for acrosome attachment to the nuclear envelope. The polypeptide is Cylicin-1 (CYLC1) (Bos taurus (Bovine)).